A 160-amino-acid polypeptide reads, in one-letter code: MVKFALQFKASLENLTQLRPHGEDFRWFLKLKCGNCGEVSDKWQYITLMDSVPLKGGRGSASMVQRCKLCSRENSIDILAASLHPYNAEDSETFKTIVEFECRGLEPIDFQPQAGFAAEGAETGTPFHEINLQEKDWTDYDEKAKESVGIYEVEHRFTKC.

Zn(2+)-binding residues include Cys-33, Cys-36, Cys-67, and Cys-70.

It belongs to the UPF0587 family.

The protein is CXXC motif containing zinc binding protein (czib) of Xenopus laevis (African clawed frog).